The primary structure comprises 447 residues: NADH-quinone oxidoreductase subunit N (447 aa).

13 helical membrane-spanning segments follow: residues 4-24 (FAAL…MLAA), 27-47 (LPGL…VALA), 68-88 (LTGL…RPDG), 92-112 (EGPA…GAVH), 113-133 (AASL…LFVL), 146-166 (FLIL…LGHA), 181-201 (ALLT…LALV), 215-235 (PGAA…TALV), 245-265 (VWAL…NLAA), 280-300 (VGHA…APAA), 302-322 (LFYI…AALI), 342-362 (GAAM…AGFF), and 376-395 (AWAL…YYYL).

It belongs to the complex I subunit 2 family. In terms of assembly, NDH-1 is composed of 14 different subunits. Subunits NuoA, H, J, K, L, M, N constitute the membrane sector of the complex.

The protein localises to the cell inner membrane. The enzyme catalyses a quinone + NADH + 5 H(+)(in) = a quinol + NAD(+) + 4 H(+)(out). NDH-1 shuttles electrons from NADH, via FMN and iron-sulfur (Fe-S) centers, to quinones in the respiratory chain. The immediate electron acceptor for the enzyme in this species is believed to be ubiquinone. Couples the redox reaction to proton translocation (for every two electrons transferred, four hydrogen ions are translocated across the cytoplasmic membrane), and thus conserves the redox energy in a proton gradient. The sequence is that of NADH-quinone oxidoreductase subunit N from Cereibacter sphaeroides (strain ATCC 17025 / ATH 2.4.3) (Rhodobacter sphaeroides).